A 280-amino-acid polypeptide reads, in one-letter code: Phosphonates import ATP-binding protein PhnC 1 (280 aa).

Residues 2 to 246 (LRIENLDKRY…VLTRIYGEED (245 aa)) form the ABC transporter domain. An ATP-binding site is contributed by 35 to 42 (GPSGAGKS). Residues 247–266 (WSKTSDEDADSVDAPPRAAD) form a disordered region.

It belongs to the ABC transporter superfamily. Phosphonates importer (TC 3.A.1.9.1) family. As to quaternary structure, the complex is composed of two ATP-binding proteins (PhnC), two transmembrane proteins (PhnE) and a solute-binding protein (PhnD).

The protein resides in the cell inner membrane. It catalyses the reaction phosphonate(out) + ATP + H2O = phosphonate(in) + ADP + phosphate + H(+). In terms of biological role, part of the ABC transporter complex PhnCDE involved in phosphonates import. Responsible for energy coupling to the transport system. This is Phosphonates import ATP-binding protein PhnC 1 from Rhodopseudomonas palustris (strain HaA2).